We begin with the raw amino-acid sequence, 100 residues long: Aspartyl/glutamyl-tRNA(Asn/Gln) amidotransferase subunit C (100 aa).

The protein belongs to the GatC family. In terms of assembly, heterotrimer of A, B and C subunits.

The enzyme catalyses L-glutamyl-tRNA(Gln) + L-glutamine + ATP + H2O = L-glutaminyl-tRNA(Gln) + L-glutamate + ADP + phosphate + H(+). It carries out the reaction L-aspartyl-tRNA(Asn) + L-glutamine + ATP + H2O = L-asparaginyl-tRNA(Asn) + L-glutamate + ADP + phosphate + 2 H(+). In terms of biological role, allows the formation of correctly charged Asn-tRNA(Asn) or Gln-tRNA(Gln) through the transamidation of misacylated Asp-tRNA(Asn) or Glu-tRNA(Gln) in organisms which lack either or both of asparaginyl-tRNA or glutaminyl-tRNA synthetases. The reaction takes place in the presence of glutamine and ATP through an activated phospho-Asp-tRNA(Asn) or phospho-Glu-tRNA(Gln). The protein is Aspartyl/glutamyl-tRNA(Asn/Gln) amidotransferase subunit C of Streptococcus agalactiae serotype III (strain NEM316).